The chain runs to 208 residues: 3-demethoxyubiquinol 3-hydroxylase (208 aa).

Fe cation-binding residues include Glu-57, Glu-87, His-90, Glu-139, Glu-171, and His-174.

Belongs to the COQ7 family. It depends on Fe cation as a cofactor.

It localises to the cell membrane. The catalysed reaction is a 5-methoxy-2-methyl-3-(all-trans-polyprenyl)benzene-1,4-diol + AH2 + O2 = a 3-demethylubiquinol + A + H2O. The protein operates within cofactor biosynthesis; ubiquinone biosynthesis. Catalyzes the hydroxylation of 2-nonaprenyl-3-methyl-6-methoxy-1,4-benzoquinol during ubiquinone biosynthesis. The polypeptide is 3-demethoxyubiquinol 3-hydroxylase (Nitrosomonas europaea (strain ATCC 19718 / CIP 103999 / KCTC 2705 / NBRC 14298)).